Reading from the N-terminus, the 142-residue chain is Large ribosomal subunit protein uL13 (142 aa).

This sequence belongs to the universal ribosomal protein uL13 family. As to quaternary structure, part of the 50S ribosomal subunit.

In terms of biological role, this protein is one of the early assembly proteins of the 50S ribosomal subunit, although it is not seen to bind rRNA by itself. It is important during the early stages of 50S assembly. This is Large ribosomal subunit protein uL13 from Treponema denticola (strain ATCC 35405 / DSM 14222 / CIP 103919 / JCM 8153 / KCTC 15104).